Consider the following 300-residue polypeptide: Bifunctional protein FolD (300 aa).

NADP(+) contacts are provided by residues 169–171 (GRG), serine 196, and isoleucine 237.

Belongs to the tetrahydrofolate dehydrogenase/cyclohydrolase family. In terms of assembly, homodimer.

The enzyme catalyses (6R)-5,10-methylene-5,6,7,8-tetrahydrofolate + NADP(+) = (6R)-5,10-methenyltetrahydrofolate + NADPH. The catalysed reaction is (6R)-5,10-methenyltetrahydrofolate + H2O = (6R)-10-formyltetrahydrofolate + H(+). Its pathway is one-carbon metabolism; tetrahydrofolate interconversion. In terms of biological role, catalyzes the oxidation of 5,10-methylenetetrahydrofolate to 5,10-methenyltetrahydrofolate and then the hydrolysis of 5,10-methenyltetrahydrofolate to 10-formyltetrahydrofolate. In Clavibacter michiganensis subsp. michiganensis (strain NCPPB 382), this protein is Bifunctional protein FolD.